The following is a 350-amino-acid chain: Ion-translocating oxidoreductase complex subunit D (350 aa).

5 helical membrane passes run 15 to 35 (QTQT…LAQT), 36 to 56 (WFFG…ALGA), 67 to 87 (PIKP…IGLS), 88 to 108 (LPPL…IIIA), and 122 to 142 (PAMV…TSWL). Threonine 186 is subject to FMN phosphoryl threonine. Transmembrane regions (helical) follow at residues 213–233 (WGGI…LFLL), 242–262 (IPGA…LMTP), 264–284 (ATAT…AFFI), and 299–316 (LVYG…RRFG).

It belongs to the NqrB/RnfD family. In terms of assembly, the complex is composed of six subunits: RnfA, RnfB, RnfC, RnfD, RnfE and RnfG. The cofactor is FMN.

The protein localises to the cell inner membrane. Its function is as follows. Part of a membrane-bound complex that couples electron transfer with translocation of ions across the membrane. The sequence is that of Ion-translocating oxidoreductase complex subunit D from Aeromonas salmonicida (strain A449).